The chain runs to 593 residues: Transcriptional repressor p66-beta (593 aa).

Serine 17 bears the Phosphoserine mark. Residues lysine 33, lysine 66, and lysine 97 each participate in a glycyl lysine isopeptide (Lys-Gly) (interchain with G-Cter in SUMO2) cross-link. The interval 62–123 (ELPTKQDGSG…PERGRLTPSP (62 aa)) is disordered. Basic and acidic residues-rich tracts occupy residues 74-100 (GYEE…KENI) and 108-118 (SARRSEPERGR). Position 120 is a phosphothreonine (threonine 120). A phosphoserine mark is found at serine 122, serine 129, serine 134, and serine 135. Positions 140 to 194 (SRMEERLKAANLEMFKGKGIEERQQLIKQLRDELRLEEARLVLLKKLRQSQLQKE) form a coiled coil. Lysine 147 is covalently cross-linked (Glycyl lysine isopeptide (Lys-Gly) (interchain with G-Cter in SUMO2)). Positions 165 to 195 (LIKQLRDELRLEEARLVLLKKLRQSQLQKEN) are CR1; interaction with MBD2 and MBD3. Lysine 199 participates in a covalent cross-link: Glycyl lysine isopeptide (Lys-Gly) (interchain with G-Cter in SUMO2). Serine 208 is modified (phosphoserine). The segment at 213–235 (SPAHVGQQGLSKLPSRPGAQGVE) is disordered. Residue lysine 281 forms a Glycyl lysine isopeptide (Lys-Gly) (interchain with G-Cter in SUMO2) linkage. Residues serine 333, serine 338, and serine 340 each carry the phosphoserine modification. The tract at residues 340–480 (SAMTDAANSQ…QEQEIEQRLQ (141 aa)) is CR2; histone tail-binding. Residues lysine 353, lysine 454, and lysine 467 each participate in a glycyl lysine isopeptide (Lys-Gly) (interchain with G-Cter in SUMO2) cross-link. The GATA-type zinc-finger motif lies at 414 to 467 (RVEPFVCAQCRTDFTPHWKQEKNGKILCEQCMTSNQKKALKAEHTNRLKNAFVK). Residues 449-482 (QKKALKAEHTNRLKNAFVKALQQEQEIEQRLQQQ) are a coiled coil. At serine 486 the chain carries Phosphoserine. Residue lysine 498 forms a Glycyl lysine isopeptide (Lys-Gly) (interchain with G-Cter in SUMO2) linkage.

As to quaternary structure, homooligomer. Component of the nucleosome remodeling and deacetylase (NuRD) repressor complex, composed of core proteins MTA1, MTA2, MTA3, RBBP4, RBBP7, HDAC1, HDAC2, MBD2, MBD3, and peripherally associated proteins CDK2AP1, CDK2AP2, GATAD2A, GATAD2B, CHD3, CHD4 and CHD5. The exact stoichiometry of the NuRD complex is unknown, and some subunits such as MBD2 and MBD3, GATAD2A and GATAD2B, and CHD3, CHD4 and CHD5 define mutually exclusive NuRD complexes. Interacts with MBD2; this is required for the enhancement of MBD2-mediated repression and for targeting to the chromatin. Interacts with MBD3. Component of the MeCP1 histone deacetylase complex. Interacts with histone tails, including that of histones H2A, H2B, H3 and H4. Interacts with ERCC6. In terms of tissue distribution, widely expressed.

Its subcellular location is the nucleus speckle. It is found in the nucleus. It localises to the chromosome. Transcriptional repressor. Acts as a component of the histone deacetylase NuRD complex which participates in the remodeling of chromatin. Enhances MBD2-mediated repression. Efficient repression requires the presence of GATAD2A. Targets MBD3 to discrete loci in the nucleus. May play a role in synapse development. The polypeptide is Transcriptional repressor p66-beta (GATAD2B) (Homo sapiens (Human)).